The following is a 255-amino-acid chain: 4-hydroxy-tetrahydrodipicolinate reductase (255 aa).

Residues 8–13 (GATGRV), 88–90 (GTT), and 112–115 (ATNM) contribute to the NAD(+) site. The active-site Proton donor/acceptor is histidine 144. Histidine 145 is a binding site for (S)-2,3,4,5-tetrahydrodipicolinate. The active-site Proton donor is the lysine 148. (S)-2,3,4,5-tetrahydrodipicolinate is bound at residue 154–155 (GT).

The protein belongs to the DapB family.

The protein resides in the cytoplasm. It carries out the reaction (S)-2,3,4,5-tetrahydrodipicolinate + NAD(+) + H2O = (2S,4S)-4-hydroxy-2,3,4,5-tetrahydrodipicolinate + NADH + H(+). It catalyses the reaction (S)-2,3,4,5-tetrahydrodipicolinate + NADP(+) + H2O = (2S,4S)-4-hydroxy-2,3,4,5-tetrahydrodipicolinate + NADPH + H(+). It functions in the pathway amino-acid biosynthesis; L-lysine biosynthesis via DAP pathway; (S)-tetrahydrodipicolinate from L-aspartate: step 4/4. Its function is as follows. Catalyzes the conversion of 4-hydroxy-tetrahydrodipicolinate (HTPA) to tetrahydrodipicolinate. This is 4-hydroxy-tetrahydrodipicolinate reductase from Helicobacter hepaticus (strain ATCC 51449 / 3B1).